The primary structure comprises 354 residues: MKSIISLTAAAAIGVAMFVAPAFAADKGTVGIAMPTKASARWIDDGNNIVKQLQAAGYGTDLQYGDDDIPNQLSQVENMVTKGDKVLVIAAIDGTTLSDVLQKAHDAGIKVIAYDRLIRNSGNVDYYATFDNFKVGVLQANSIVDGLGLKDGKGPFNIELFGGSPDDNNAFFFYDGAMSVLKPYIDSGKLVVKSGQQGMDKVGTLRWDPATAQARMDNLLSAYYTDAHVDAVLSPYDGLSIGILSSLKGVGYGTGGQKLPIVTGQDSEIPSVKSIIAGEQHSTIFKDTRDLAKVTVDMVNALMEGKTPEVTDTKTYDNGVKVVPSYLLTPVAVDKTNYEKVLVEGGYYKADQLK.

Positions 1-25 (MKSIISLTAAAAIGVAMFVAPAFAA) are cleaved as a signal peptide.

The protein belongs to the bacterial solute-binding protein 2 family.

Its subcellular location is the periplasm. In terms of biological role, required for effective transcriptional induction of the vir genes by monosaccharides in response to plant signals and for normal growth and chemotaxis towards certain sugars. Functions as a periplasmic multiple sugar-binding receptor protein. It does not interact with a transport system. In Rhizobium radiobacter (Agrobacterium tumefaciens), this protein is Multiple sugar-binding periplasmic receptor ChvE (chvE).